Here is a 591-residue protein sequence, read N- to C-terminus: Chaperone protein DnaK (591 aa).

Position 175 is a phosphothreonine; by autocatalysis (Thr-175). The segment covering 568–577 has biased composition (low complexity); that stretch reads AQAAEFANKQ. The disordered stretch occupies residues 568 to 591; sequence AQAAEFANKQNESDPNNNSSEQNN. Residues 580 to 591 are compositionally biased toward polar residues; sequence SDPNNNSSEQNN.

The protein belongs to the heat shock protein 70 family.

Functionally, acts as a chaperone. The protein is Chaperone protein DnaK of Mycoplasma mycoides subsp. mycoides SC (strain CCUG 32753 / NCTC 10114 / PG1).